The chain runs to 198 residues: MSNVRVSNGSPSLERMDARQAEYPKPSACRNLFGPVNHEELTRDLEKHCRDMEEASQRKWNFDFQNHKPLEGKYEWQEVEKGSLPEFYYRPPRPPKGACKVPAQESQDVSGNRQAVPLIGSQANTEDTHLVDQKTDTSDNQTGLAEQCPGIRKRPATDDSSPQNKRANRTEENVSDGSPNAGSVEQTPKKPGLRRRQT.

The span at 1–11 (MSNVRVSNGSP) shows a compositional bias: polar residues. The tract at residues 1–22 (MSNVRVSNGSPSLERMDARQAE) is disordered. A Phosphoserine; by UHMK1 modification is found at serine 10. The interaction with CDK2 stretch occupies residues 51–91 (DMEEASQRKWNFDFQNHKPLEGKYEWQEVEKGSLPEFYYRP). Phosphotyrosine; by SRC is present on tyrosine 74. Positions 87-198 (FYYRPPRPPK…KKPGLRRRQT (112 aa)) are disordered. Position 88 is a phosphotyrosine; by ABL, LYN and SRC (tyrosine 88). Tyrosine 89 is modified (phosphotyrosine). The segment covering 104–113 (QESQDVSGNR) has biased composition (polar residues). Residues 126–137 (EDTHLVDQKTDT) are compositionally biased toward basic and acidic residues. The Nuclear localization signal motif lies at 153–169 (KRPATDDSSPQNKRANR). Threonine 157 is modified (phosphothreonine; by CaMK1, PKB/AKT1 and PIM1). Threonine 170 is subject to Phosphothreonine. Over residues 175-186 (SDGSPNAGSVEQ) the composition is skewed to polar residues. Threonine 187 carries the phosphothreonine; by PKB/AKT1, CDK1 and CDK2 modification. Position 198 is a phosphothreonine; by CaMK1, PKB/AKT1, RPS6KA1, RPS6KA3 and PIM1 (threonine 198).

This sequence belongs to the CDI family. As to quaternary structure, forms a ternary complex composed of CCNE1, CDK2 and CDKN1B. Interacts directly with CCNE1; the interaction is inhibited by CDK2-dependent phosphorylation on Thr-187. Interacts with COPS5, subunit of the COP9 signalosome complex; the interaction leads to CDKN1B degradation. Interacts with NUP50; the interaction leads to nuclear import and degradation of phosphorylated CDKN1B. Interacts with CCND1 and SNX6. Interacts (Thr-198-phosphorylated form) with 14-3-3 proteins, binds strongly YWHAQ, weakly YWHAE and YWHAH, but not YWHAB nor YWHAZ; the interaction with YWHAQ results in translocation to the cytoplasm. Interacts with AKT1 and LYN; the interactions lead to cytoplasmic mislocation, phosphorylation of CDKN1B and inhibition of cell cycle arrest. Forms a ternary complex with CCNA2 and CDK2; CDKN1B inhibits the kinase activity of CDK2 through conformational rearrangements. Interacts (unphosphorylated form) with CDK2. Forms a complex with CDK2 and SPDYA, but does not directly interact with SPDYA. Forms a ternary complex composed of cyclin D, CDK4 and CDKN1B. Interacts (phosphorylated on Tyr-88 and Tyr-89) with CDK4; the interaction is required for cyclin D and CDK4 complex assembly, induces nuclear translocation and activates the CDK4 kinase activity. Interacts with GRB2. Interacts with PIM1. Identified in a complex with SKP1, SKP2 and CKS1B. Interacts with UHMK1; the interaction leads to cytoplasmic mislocation, phosphorylation of CDKN1B and inhibition of cell cycle arrest. Also interacts with CDK1. Dephosphorylated on Thr-187 by PPM1H, leading to CDKN1B stability. Post-translationally, phosphorylated; phosphorylation occurs on serine, threonine and tyrosine residues. Phosphorylation on Ser-10 is the major site of phosphorylation in resting cells, takes place at the G(0)-G(1) phase and leads to protein stability. Phosphorylation on other sites is greatly enhanced by mitogens, growth factors, cMYC and in certain cancer cell lines. The phosphorylated form found in the cytoplasm is inactivate. Phosphorylation on Thr-198 is required for interaction with 14-3-3 proteins. Phosphorylation on Thr-187, by CDK1 and CDK2 leads to protein ubiquitination and proteasomal degradation. Tyrosine phosphorylation promotes this process. Phosphorylation by PKB/AKT1 can be suppressed by LY294002, an inhibitor of the catalytic subunit of PI3K. Phosphorylation on Tyr-88 and Tyr-89 has no effect on binding CDK2, but is required for binding CDK4. Dephosphorylated on tyrosine residues by G-CSF. Dephosphorylated on Thr-187 by PPM1H, leading to CDKN1B stability. Ubiquitinated; in the cytoplasm by the KPC complex (composed of RNF123/KPC1 and UBAC1/KPC2) and, in the nucleus, by SCF(SKP2). The latter requires prior phosphorylation on Thr-187. Ubiquitinated; by a TRIM21-containing SCF(SKP2)-like complex; leads to its degradation. In terms of processing, subject to degradation in the lysosome. Interaction with SNX6 promotes lysosomal degradation.

It localises to the nucleus. The protein localises to the cytoplasm. The protein resides in the endosome. In terms of biological role, important regulator of cell cycle progression. Inhibits the kinase activity of CDK2 bound to cyclin A, but has little inhibitory activity on CDK2 bound to SPDYA. Involved in G1 arrest. Potent inhibitor of cyclin E- and cyclin A-CDK2 complexes. Forms a complex with cyclin type D-CDK4 complexes and is involved in the assembly, stability, and modulation of CCND1-CDK4 complex activation. Acts either as an inhibitor or an activator of cyclin type D-CDK4 complexes depending on its phosphorylation state and/or stoichometry. This Felis catus (Cat) protein is Cyclin-dependent kinase inhibitor 1B (CDKN1B).